The following is a 217-amino-acid chain: Thiamine-phosphate synthase (217 aa).

Residues Gln39 to Lys43 and Asn71 contribute to the 4-amino-2-methyl-5-(diphosphooxymethyl)pyrimidine site. Residues Asp72 and Asp91 each coordinate Mg(2+). 4-amino-2-methyl-5-(diphosphooxymethyl)pyrimidine is bound at residue Ser110. 2-[(2R,5Z)-2-carboxy-4-methylthiazol-5(2H)-ylidene]ethyl phosphate is bound at residue Ser137–Thr139. Residue Lys140 coordinates 4-amino-2-methyl-5-(diphosphooxymethyl)pyrimidine. Residues Gly173 and Ile193 to Ser194 contribute to the 2-[(2R,5Z)-2-carboxy-4-methylthiazol-5(2H)-ylidene]ethyl phosphate site.

The protein belongs to the thiamine-phosphate synthase family. Requires Mg(2+) as cofactor.

The catalysed reaction is 2-[(2R,5Z)-2-carboxy-4-methylthiazol-5(2H)-ylidene]ethyl phosphate + 4-amino-2-methyl-5-(diphosphooxymethyl)pyrimidine + 2 H(+) = thiamine phosphate + CO2 + diphosphate. It catalyses the reaction 2-(2-carboxy-4-methylthiazol-5-yl)ethyl phosphate + 4-amino-2-methyl-5-(diphosphooxymethyl)pyrimidine + 2 H(+) = thiamine phosphate + CO2 + diphosphate. It carries out the reaction 4-methyl-5-(2-phosphooxyethyl)-thiazole + 4-amino-2-methyl-5-(diphosphooxymethyl)pyrimidine + H(+) = thiamine phosphate + diphosphate. It functions in the pathway cofactor biosynthesis; thiamine diphosphate biosynthesis; thiamine phosphate from 4-amino-2-methyl-5-diphosphomethylpyrimidine and 4-methyl-5-(2-phosphoethyl)-thiazole: step 1/1. Condenses 4-methyl-5-(beta-hydroxyethyl)thiazole monophosphate (THZ-P) and 2-methyl-4-amino-5-hydroxymethyl pyrimidine pyrophosphate (HMP-PP) to form thiamine monophosphate (TMP). The polypeptide is Thiamine-phosphate synthase (Bordetella parapertussis (strain 12822 / ATCC BAA-587 / NCTC 13253)).